Consider the following 429-residue polypeptide: Acetyltransferase pyr8 (429 aa).

Transmembrane regions (helical) follow at residues 12 to 32 (IAQELALYLAFTVPTAFVIIT), 39 to 56 (LRLAWTPCLLYILYRFSL), 69 to 89 (GVAAGQATVAALQCLNLLLIT), 154 to 174 (YVLRESAIIIWQYLLLDLIHM), 221 to 241 (VCLNIVSRIYCLVLVVLRISA), 300 to 320 (IFFTFFTSAVLHLACDAILGI), 324 to 344 (GSGAMPFFCVVPLAIMFEDGV), 365 to 385 (LVGFLWVGSWMYATSPWYLYP), and 409 to 429 (VAQKVLLVYGVVLYWAIGGEI).

The protein belongs to the wax synthase family.

Its subcellular location is the membrane. Its pathway is secondary metabolite biosynthesis; terpenoid biosynthesis. Functionally, acetyltransferase; part of the gene cluster that mediates the biosynthesis of pyripyropene A, a specific human acyl-coenzyme A:cholesterol acyltransferase 2 inhibitor. The first step of the pathway is the synthesis of nicotinyl-CoA from nicotinic acid by the nicotinic acid-CoA ligase pyr1. Nicotinyl-CoA is then a substrate of polyketide synthase pyr2 to produce 4-hydroxy-6-(3-pyridinyl)-2H-pyran-2-one (HPPO) which is further prenylated by the polyprenyl transferase pyr6 to yield farnesyl-HPPO. The next steps consist of an epoxidation of farnesyl-HPPO to epoxyfarnesyl-HPPO by FAD-dependent monooxygenase pyr5 and a cyclization of the terpenoid portion by the terpene cyclase pyr4 to yield deacetyl-pyripyropene E. The 2 cytochrome P450 monooxygenases pyr3 and pyr9, and the 2 acetyltransferases pyr7 and pyr8 are involved in the conversion of deacetyl-pyripyropene E into pyripyropene A through several cycles of oxidation and acetylation steps. Pyr7 acetylates deacetyl-pyripyropene E to pyripyropene E which is oxidized to 11-deacetyl-pyripyropene O by pyr3, which is in turn acetylated into pyripyropene O by pyr8. Pyripyropene O is then oxidized to deacetyl-pyripyropene A by pyr9. Deacetyl-pyripyropene A is finally acetylated to pyripyropene A by pyr8. The protein is Acetyltransferase pyr8 of Aspergillus fumigatus (strain ATCC MYA-4609 / CBS 101355 / FGSC A1100 / Af293) (Neosartorya fumigata).